The primary structure comprises 928 residues: BCAS3 microtubule associated cell migration factor (928 aa).

Met-1 is modified (N-acetylmethionine). Residue Lys-215 forms a Glycyl lysine isopeptide (Lys-Gly) (interchain with G-Cter in SUMO1); alternate linkage. Residue Lys-215 forms a Glycyl lysine isopeptide (Lys-Gly) (interchain with G-Cter in SUMO2); alternate linkage. 2 required for recruitment to preautophagosomal structure in response to mitophagy regions span residues 254–312 (RGGA…SRRS) and 437–560 (YGGQ…IKAP). Residues Ser-461, Ser-480, and Ser-488 each carry the phosphoserine modification. 2 disordered regions span residues 472–518 (TSKQ…PRLS) and 795–816 (VRSDPVSMPGSSRAVSDRRGVS). Low complexity-rich tracts occupy residues 480–494 (SPVPGLSSSPSGSPL) and 505–514 (NNFTNNNPGN). Residues Ser-838, Ser-886, and Ser-898 each carry the phosphoserine modification. Residues 868–928 (ESPSRDVVGS…PLSLFPTGFP (61 aa)) are disordered. Over residues 887–901 (IETLSNSSGSTSGSI) the composition is skewed to low complexity.

It belongs to the BCAS3 family. In terms of assembly, interacts with histone H3, ESR1, KAT2B and PELP1; the interactions occur in a estrogen-dependent manner. Interacts with beta-tubulin and VIM. Interacts (via C-terminal) with PHAF1; the interaction is requrired for the association with the phagophore. In terms of tissue distribution, expressed in blood islands and yolk sac blood islands (at protein level). Highly expressed in mammary tumors. Expressed in eostrogen-induced epithelial cells of mammary glands. Expressed in brain, heart, kidney, lung, liver and spleen. Expressed in embryonic stem cells, embryoid bodies, endothelial cells and fibroblasts.

The protein resides in the nucleus. Its subcellular location is the cytoplasm. It localises to the cytoskeleton. It is found in the preautophagosomal structure. In terms of biological role, functions synergistically with PELP1 as a transcriptional coactivator of estrogen receptor-responsive genes. Stimulates histone acetyltransferase activity. Binds to chromatin. Plays a role in angiogenesis. Participates in the regulation of cell polarity and directional endothelial cell migration by mediating both the activation and recruitment of CDC42 and the reorganization of the actin cytoskeleton at the cell leading edge. Promotes filipodia formation. Plays a regulatory role in autophagic activity. In complex with PHAF1, associates with the preautophagosomal structure during both non-selective and selective autophagy. Probably binds phosphatidylinositol 3-phosphate (PtdIns3P) which would mediate the recruitment preautophagosomal structures. This chain is BCAS3 microtubule associated cell migration factor, found in Mus musculus (Mouse).